A 141-amino-acid polypeptide reads, in one-letter code: Antifungal protein ginkbilobin-like protein 1 (141 aa).

The N-terminal stretch at 1–32 is a signal peptide; sequence MSISSKFQLRSSTSLLLLVALMVVMGMDGAAA. In terms of domain architecture, Gnk2-homologous spans 36 to 141; that stretch reads TNFVSSACNT…CFIQYEQHSF (106 aa). Intrachain disulfides connect Cys-43/Cys-119, Cys-95/Cys-104, and Cys-107/Cys-132. Asn-44 lines the alpha-D-mannopyranose pocket. Residues Arg-126 and Glu-137 each coordinate alpha-D-mannopyranose.

Its function is as follows. Exerts antifungal activity through its carbohydrate-binding specificity. This chain is Antifungal protein ginkbilobin-like protein 1, found in Picea glauca (White spruce).